Reading from the N-terminus, the 118-residue chain is Large ribosomal subunit protein uL18 (118 aa).

The interval Met-1–Gly-24 is disordered. The segment covering Ile-10 to Gly-20 has biased composition (basic residues).

This sequence belongs to the universal ribosomal protein uL18 family. As to quaternary structure, part of the 50S ribosomal subunit; part of the 5S rRNA/L5/L18/L25 subcomplex. Contacts the 5S and 23S rRNAs.

In terms of biological role, this is one of the proteins that bind and probably mediate the attachment of the 5S RNA into the large ribosomal subunit, where it forms part of the central protuberance. This Streptococcus sanguinis (strain SK36) protein is Large ribosomal subunit protein uL18.